Reading from the N-terminus, the 193-residue chain is 3-isopropylmalate dehydratase small subunit (193 aa).

This sequence belongs to the LeuD family. LeuD type 1 subfamily. In terms of assembly, heterodimer of LeuC and LeuD.

It catalyses the reaction (2R,3S)-3-isopropylmalate = (2S)-2-isopropylmalate. It functions in the pathway amino-acid biosynthesis; L-leucine biosynthesis; L-leucine from 3-methyl-2-oxobutanoate: step 2/4. In terms of biological role, catalyzes the isomerization between 2-isopropylmalate and 3-isopropylmalate, via the formation of 2-isopropylmaleate. This chain is 3-isopropylmalate dehydratase small subunit, found in Listeria innocua serovar 6a (strain ATCC BAA-680 / CLIP 11262).